We begin with the raw amino-acid sequence, 437 residues long: GTPase Era, mitochondrial (437 aa).

The N-terminal 20 residues, 1-20 (MAAPRRYCAGLVRALLGARQ), are a transit peptide targeting the mitochondrion. The Era-type G domain occupies 112–330 (RVLRVVLLGA…QYLLTQAQPG (219 aa)). Positions 120–127 (GAPNAGKS) are G1. 120-127 (GAPNAGKS) serves as a coordination point for GTP. The G2 stretch occupies residues 146–150 (HTTRC). The tract at residues 167-170 (DTPG) is G3. A GTP-binding site is contributed by 167–171 (DTPGI). At Ser-173 the chain carries Phosphoserine. Residue 236–239 (NKVD) participates in GTP binding. A G4 region spans residues 236-239 (NKVD). The interval 270 to 292 (LRSRSSTHCPGPETEGPNAHSVR) is disordered. Residues 308-310 (LSA) are G5. In terms of domain architecture, KH type-2 spans 360-437 (LPEEVPYGVQ…LIRLSVKLLK (78 aa)).

The protein belongs to the TRAFAC class TrmE-Era-EngA-EngB-Septin-like GTPase superfamily. Era GTPase family.

The protein localises to the mitochondrion matrix. It is found in the mitochondrion inner membrane. Its function is as follows. Probable GTPase that plays a role in the mitochondrial ribosomal small subunit assembly. Specifically binds the 12S mitochondrial rRNA (12S mt-rRNA) to a 33 nucleotide section delineating the 3' terminal stem-loop region. May act as a chaperone that protects the 12S mt-rRNA on the 28S mitoribosomal subunit during ribosomal small subunit assembly. The sequence is that of GTPase Era, mitochondrial (Eral1) from Mus musculus (Mouse).